A 330-amino-acid chain; its full sequence is NADH-quinone oxidoreductase subunit H (330 aa).

8 helical membrane passes run 5–25 (LLTL…VLTL), 78–98 (WVFM…FAVI), 120–140 (IGLL…ALGG), 155–175 (AMAQ…PVVM), 191–211 (SLPN…AIMA), 243–263 (FFVG…VLFL), 271–291 (LPGI…FIWV), and 308–328 (WKIL…WLIW).

Belongs to the complex I subunit 1 family. As to quaternary structure, NDH-1 is composed of 14 different subunits. Subunits NuoA, H, J, K, L, M, N constitute the membrane sector of the complex.

The protein resides in the cell inner membrane. It carries out the reaction a quinone + NADH + 5 H(+)(in) = a quinol + NAD(+) + 4 H(+)(out). In terms of biological role, NDH-1 shuttles electrons from NADH, via FMN and iron-sulfur (Fe-S) centers, to quinones in the respiratory chain. The immediate electron acceptor for the enzyme in this species is believed to be ubiquinone. Couples the redox reaction to proton translocation (for every two electrons transferred, four hydrogen ions are translocated across the cytoplasmic membrane), and thus conserves the redox energy in a proton gradient. This subunit may bind ubiquinone. This is NADH-quinone oxidoreductase subunit H from Syntrophotalea carbinolica (strain DSM 2380 / NBRC 103641 / GraBd1) (Pelobacter carbinolicus).